Consider the following 211-residue polypeptide: Claudin-1 (211 aa).

Over 1–7 (MANAGLQ) the chain is Cytoplasmic. The helical transmembrane segment at 8 to 28 (LLGFILASLGWIGSIVSTALP) threads the bilayer. Over 29–81 (QWKIYSYAGDNIVTAQAIYEGLWMSCVSQSTGQIQCKVFDSLLNLNSTLQATR) the chain is Extracellular. Cys54 and Cys64 are disulfide-bonded. Residues 82–102 (ALMVIGILLGLIAIFVSTIGM) traverse the membrane as a helical segment. Topologically, residues 103–115 (KCMRCLEDDEVQK) are cytoplasmic. The chain crosses the membrane as a helical span at residues 116-136 (MWMAVIGGIIFVISGLATLVA). Topologically, residues 137-163 (TAWYGNRIVQEFYDPMTPVNARYEFGQ) are extracellular. Residues 164–184 (ALFTGWAAASLCLLGGALLSC) traverse the membrane as a helical segment. At 185–211 (SCPRKTTSYPTPRPYPKPTPSSGKDYV) the chain is on the cytoplasmic side. The segment at 190–211 (TTSYPTPRPYPKPTPSSGKDYV) is disordered. The interactions with TJP1, TJP2, TJP3 and PATJ stretch occupies residues 210-211 (YV).

This sequence belongs to the claudin family. Can form homo- and heteropolymers with other CLDN. Homopolymers interact with CLDN3, but not CLDN2, homopolymers. Directly interacts with TJP1/ZO-1, TJP2/ZO-2 and TJP3/ZO-3. Interacts with MPDZ and PATJ. Interacts with OCLN, CD81, CLDN4, CLDN6 and CLDN9. As to expression, detected in epididymis (at protein level). Detected in testis and epididymis.

It localises to the cell junction. Its subcellular location is the tight junction. The protein resides in the cell membrane. The protein localises to the basolateral cell membrane. Its function is as follows. Claudins function as major constituents of the tight junction complexes that regulate the permeability of epithelia. While some claudin family members play essential roles in the formation of impermeable barriers, others mediate the permeability to ions and small molecules. Often, several claudin family members are coexpressed and interact with each other, and this determines the overall permeability. CLDN1 is required to prevent the paracellular diffusion of small molecules through tight junctions in the epidermis and is required for the normal barrier function of the skin. Required for normal water homeostasis and to prevent excessive water loss through the skin, probably via an indirect effect on the expression levels of other proteins, since CLDN1 itself seems to be dispensable for water barrier formation in keratinocyte tight junctions. This chain is Claudin-1 (Cldn1), found in Rattus norvegicus (Rat).